The following is a 382-amino-acid chain: Zinc metalloproteinase nas-7 (382 aa).

An N-terminal signal peptide occupies residues 1-18; sequence MLLPWIITIVTVIPATLG. Residues 19-79 constitute a propeptide that is removed on maturation; that stretch reads HRNRVQDDEM…DIRLPRRHKR (61 aa). In terms of domain architecture, Peptidase M12A spans 80–273; that stretch reads NGVSRAAKLW…SKINRMYNCP (194 aa). Cystine bridges form between C122/C272, C144/C163, C348/C382, C355/C375, and C362/C379. H171 contributes to the Zn(2+) binding site. E172 is an active-site residue. Zn(2+) is bound by residues H175 and H181. The ShKT domain occupies 348 to 382; that stretch reads CEDRITVCWWTADRCRSPAIYQVMSSLCPKTCKFC.

Requires Zn(2+) as cofactor. Expressed in the head of adult hermaphrodites but not within pharynx cells. Expressed in pharyngeal muscles, mc cells, intestine, hypodermal seam cells, arcade cells, spermatheca, vulva and rectal epithelial cells.

The protein localises to the secreted. Functionally, metalloprotease. The chain is Zinc metalloproteinase nas-7 (nas-7) from Caenorhabditis elegans.